Reading from the N-terminus, the 421-residue chain is Large ribosomal subunit protein uL4 (421 aa).

Ala2 carries the N-acetylalanine modification. Residue Lys14 is modified to N6-acetyllysine. Arg97 carries the omega-N-methylarginine modification. Residue Lys106 is modified to N6-acetyllysine. Lys239 participates in a covalent cross-link: Glycyl lysine isopeptide (Lys-Gly) (interchain with G-Cter in SUMO2). An N6-acetyllysine modification is found at Lys259. Phosphothreonine is present on Thr266. Phosphoserine occurs at positions 290 and 295. Arg300 carries the post-translational modification Citrulline. A Glycyl lysine isopeptide (Lys-Gly) (interchain with G-Cter in SUMO2) cross-link involves residue Lys327. Lys333 and Lys353 each carry N6-acetyllysine. Lys364 is modified (N6-acetyllysine; alternate). Lys364 is covalently cross-linked (Glycyl lysine isopeptide (Lys-Gly) (interchain with G-Cter in SUMO1); alternate). Ser365 carries the post-translational modification Phosphoserine. Basic and acidic residues predominate over residues 365–379 (SEKIVPEKGAGDKKP). The interval 365-421 (SEKIVPEKGAGDKKPAVGKKGKKPVDAKKLKKPAGKKVVTKKPAEKKPTTEEKKSAA) is disordered. A compositionally biased stretch (basic residues) spans 393 to 404 (KLKKPAGKKVVT). Over residues 406–421 (KPAEKKPTTEEKKSAA) the composition is skewed to basic and acidic residues.

This sequence belongs to the universal ribosomal protein uL4 family. As to quaternary structure, component of the large ribosomal subunit. May bind IPO9 with low affinity. Interacts with RBM3. In terms of processing, citrullinated by PADI4.

The protein resides in the cytoplasm. Component of the large ribosomal subunit. The ribosome is a large ribonucleoprotein complex responsible for the synthesis of proteins in the cell. This is Large ribosomal subunit protein uL4 (Rpl4) from Rattus norvegicus (Rat).